The following is a 504-amino-acid chain: Maturase K (504 aa).

It belongs to the intron maturase 2 family. MatK subfamily.

The protein localises to the plastid. Its subcellular location is the chloroplast. Usually encoded in the trnK tRNA gene intron. Probably assists in splicing its own and other chloroplast group II introns. This Gossypium turneri (Cotton) protein is Maturase K.